Here is a 306-residue protein sequence, read N- to C-terminus: tRNA dimethylallyltransferase 1 (306 aa).

15 to 22 (GPTGSGKS) serves as a coordination point for ATP. Position 17-22 (17-22 (TGSGKS)) interacts with substrate. Positions 40 to 43 (DSMQ) are interaction with substrate tRNA.

It belongs to the IPP transferase family. Monomer. It depends on Mg(2+) as a cofactor.

It carries out the reaction adenosine(37) in tRNA + dimethylallyl diphosphate = N(6)-dimethylallyladenosine(37) in tRNA + diphosphate. In terms of biological role, catalyzes the transfer of a dimethylallyl group onto the adenine at position 37 in tRNAs that read codons beginning with uridine, leading to the formation of N6-(dimethylallyl)adenosine (i(6)A). This Citrifermentans bemidjiense (strain ATCC BAA-1014 / DSM 16622 / JCM 12645 / Bem) (Geobacter bemidjiensis) protein is tRNA dimethylallyltransferase 1.